The chain runs to 158 residues: Transcription elongation factor GreA (158 aa).

It belongs to the GreA/GreB family.

Necessary for efficient RNA polymerase transcription elongation past template-encoded arresting sites. The arresting sites in DNA have the property of trapping a certain fraction of elongating RNA polymerases that pass through, resulting in locked ternary complexes. Cleavage of the nascent transcript by cleavage factors such as GreA or GreB allows the resumption of elongation from the new 3'terminus. GreA releases sequences of 2 to 3 nucleotides. This Rhizobium etli (strain CIAT 652) protein is Transcription elongation factor GreA.